Consider the following 597-residue polypeptide: Arginine--tRNA ligase (597 aa).

A 'HIGH' region motif is present at residues 125–135 (PNTNKPLHLGH).

The protein belongs to the class-I aminoacyl-tRNA synthetase family. Monomer.

The protein localises to the cytoplasm. The enzyme catalyses tRNA(Arg) + L-arginine + ATP = L-arginyl-tRNA(Arg) + AMP + diphosphate. The protein is Arginine--tRNA ligase of Porphyromonas gingivalis (strain ATCC 33277 / DSM 20709 / CIP 103683 / JCM 12257 / NCTC 11834 / 2561).